The primary structure comprises 111 residues: Nucleoid-associated protein PputGB1_3833 (111 aa).

Disordered regions lie at residues 1 to 25 (MMKG…KMQE) and 87 to 111 (EQSS…KMPF).

It belongs to the YbaB/EbfC family. In terms of assembly, homodimer.

The protein resides in the cytoplasm. It localises to the nucleoid. Binds to DNA and alters its conformation. May be involved in regulation of gene expression, nucleoid organization and DNA protection. This is Nucleoid-associated protein PputGB1_3833 from Pseudomonas putida (strain GB-1).